The chain runs to 51 residues: Insulin (51 aa).

Disulfide bonds link Cys-7–Cys-37, Cys-19–Cys-50, and Cys-36–Cys-41.

It belongs to the insulin family. Heterodimer of a B chain and an A chain linked by two disulfide bonds.

The protein resides in the secreted. Insulin decreases blood glucose concentration. It increases cell permeability to monosaccharides, amino acids and fatty acids. It accelerates glycolysis, the pentose phosphate cycle, and glycogen synthesis in liver. In Hystrix cristata (North African crested porcupine), this protein is Insulin (INS).